We begin with the raw amino-acid sequence, 639 residues long: Ubiquitin-like modifier-activating enzyme ATG7 (639 aa).

A GXGXXG motif motif is present at residues 322 to 327 (GAGTLG). The active-site Glycyl thioester intermediate is Cys-502.

It belongs to the ATG7 family. As to quaternary structure, homodimer.

Its subcellular location is the cytoplasm. The protein resides in the preautophagosomal structure. Its function is as follows. E1-like activating enzyme involved in the 2 ubiquitin-like systems required for cytoplasm to vacuole transport (Cvt) and autophagy. Activates ATG12 for its conjugation with ATG5 and ATG8 for its conjugation with phosphatidylethanolamine. Both systems are needed for the ATG8 association to Cvt vesicles and autophagosomes membranes. Autophagy is essential for maintenance of amino acid levels and protein synthesis under nitrogen starvation. Required for selective autophagic degradation of the nucleus (nucleophagy) as well as for mitophagy which contributes to regulate mitochondrial quantity and quality by eliminating the mitochondria to a basal level to fulfill cellular energy requirements and preventing excess ROS production. Plays a role in the regulation of filamentous growth and chronological longevity. This chain is Ubiquitin-like modifier-activating enzyme ATG7 (APG7), found in Candida albicans (strain SC5314 / ATCC MYA-2876) (Yeast).